The chain runs to 299 residues: Probable lipid kinase YegS (299 aa).

The 132-residue stretch at A2 to T133 folds into the DAGKc domain. ATP contacts are provided by residues T40, G66–E72, and T95. Mg(2+) is bound by residues L215, D218, and L220. E271 (proton acceptor) is an active-site residue.

This sequence belongs to the diacylglycerol/lipid kinase family. YegS lipid kinase subfamily. The cofactor is Mg(2+). Ca(2+) is required as a cofactor.

The protein resides in the cytoplasm. Probably phosphorylates lipids; the in vivo substrate is unknown. The sequence is that of Probable lipid kinase YegS from Escherichia coli (strain 55989 / EAEC).